Reading from the N-terminus, the 232-residue chain is Ornithine carbamoyltransferase (232 aa).

Carbamoyl phosphate-binding positions include Gln15, Arg39, and 66–69 (HPTQ). L-ornithine is bound by residues Asn99, Asp163, and 167 to 168 (SM). Carbamoyl phosphate-binding positions include 204–207 (HCLP) and Thr232.

The protein belongs to the aspartate/ornithine carbamoyltransferase superfamily. OTCase family.

The protein localises to the cytoplasm. It carries out the reaction carbamoyl phosphate + L-ornithine = L-citrulline + phosphate + H(+). The protein operates within amino-acid biosynthesis; L-arginine biosynthesis; L-arginine from L-ornithine and carbamoyl phosphate: step 1/3. Its function is as follows. Reversibly catalyzes the transfer of the carbamoyl group from carbamoyl phosphate (CP) to the N(epsilon) atom of ornithine (ORN) to produce L-citrulline. In Neisseria pharyngis, this protein is Ornithine carbamoyltransferase (argF).